The sequence spans 432 residues: D-amino acid dehydrogenase (432 aa).

FAD is bound at residue 3–17 (VVILGSGVVGVASAW).

Belongs to the DadA oxidoreductase family. The cofactor is FAD.

It catalyses the reaction a D-alpha-amino acid + A + H2O = a 2-oxocarboxylate + AH2 + NH4(+). Its pathway is amino-acid degradation; D-alanine degradation; NH(3) and pyruvate from D-alanine: step 1/1. Oxidative deamination of D-amino acids. This chain is D-amino acid dehydrogenase, found in Shigella sonnei (strain Ss046).